Here is a 510-residue protein sequence, read N- to C-terminus: Probable gamma-aminobutyrate transaminase 3, mitochondrial (510 aa).

The transit peptide at 1–41 (MICRSLLLLRSNAASKASNIVKHVAATGCLPKYSSEAPARY) directs the protein to the mitochondrion. Pyridoxal 5'-phosphate is bound at residue 166–167 (GS). Residue Y199 coordinates substrate. Residue D306 participates in pyridoxal 5'-phosphate binding. K335 serves as a coordination point for substrate. N6-(pyridoxal phosphate)lysine is present on K335.

It belongs to the class-III pyridoxal-phosphate-dependent aminotransferase family.

Its subcellular location is the mitochondrion. The catalysed reaction is 4-aminobutanoate + pyruvate = succinate semialdehyde + L-alanine. It carries out the reaction 4-aminobutanoate + glyoxylate = succinate semialdehyde + glycine. Functionally, transaminase that degrades gamma-amino butyric acid (GABA). This is Probable gamma-aminobutyrate transaminase 3, mitochondrial from Oryza sativa subsp. japonica (Rice).